We begin with the raw amino-acid sequence, 155 residues long: Cyanate hydratase (155 aa).

Active-site residues include Arg95, Glu98, and Ser121.

This sequence belongs to the cyanase family.

It catalyses the reaction cyanate + hydrogencarbonate + 3 H(+) = NH4(+) + 2 CO2. Its function is as follows. Catalyzes the reaction of cyanate with bicarbonate to produce ammonia and carbon dioxide. This Pseudomonas savastanoi pv. phaseolicola (strain 1448A / Race 6) (Pseudomonas syringae pv. phaseolicola (strain 1448A / Race 6)) protein is Cyanate hydratase.